The following is a 398-amino-acid chain: Elongation factor Tu (398 aa).

One can recognise a tr-type G domain in the interval 10–208 (KPHVNVGTIG…ALDSHIPEPT (199 aa)). A G1 region spans residues 19–26 (GHIDHGKT). 19–26 (GHIDHGKT) contacts GTP. Position 26 (Thr-26) interacts with Mg(2+). Residues 60–64 (TKTVT) form a G2 region. A G3 region spans residues 83-86 (DCPG). GTP-binding positions include 83–87 (DCPGH) and 138–141 (NKCD). A G4 region spans residues 138-141 (NKCD). The segment at 176 to 178 (SSL) is G5.

This sequence belongs to the TRAFAC class translation factor GTPase superfamily. Classic translation factor GTPase family. EF-Tu/EF-1A subfamily. In terms of assembly, monomer.

It localises to the cytoplasm. It carries out the reaction GTP + H2O = GDP + phosphate + H(+). Its function is as follows. GTP hydrolase that promotes the GTP-dependent binding of aminoacyl-tRNA to the A-site of ribosomes during protein biosynthesis. The sequence is that of Elongation factor Tu from Rhodopirellula baltica (strain DSM 10527 / NCIMB 13988 / SH1).